The following is a 266-amino-acid chain: MIKIAVCGAAGRMGQRIIVAAVEAGCIISGALERPGHPQIGQDAGLIAGCGQLGVAISDDLNAVVEGCDVLIDFTTPKISLKNLEVCGLKKKSIVIGSTGFTPEERALAAELAKDIPAVLAPNMSVGVNVCFKMLKDLAKTLGDDFDVEIVELHHNKKKDSPSGTAVRMGEVVAEALGRDYNQVANYHREGICGERTKEEIGMQTVRGGDIVGEHTVYFIGMGERIEISHRAMSRDMFSRGSVRAAKWIVGKQPGLYDMQDVLGLK.

NAD(+) is bound by residues 8-13 and glutamate 33; that span reads GAAGRM. Position 34 (arginine 34) interacts with NADP(+). NAD(+)-binding positions include 97–99 and 121–124; these read GST and APNM. The active-site Proton donor/acceptor is the histidine 154. Histidine 155 is a binding site for (S)-2,3,4,5-tetrahydrodipicolinate. The Proton donor role is filled by lysine 158. Position 164 to 165 (164 to 165) interacts with (S)-2,3,4,5-tetrahydrodipicolinate; sequence GT.

It belongs to the DapB family.

The protein resides in the cytoplasm. It carries out the reaction (S)-2,3,4,5-tetrahydrodipicolinate + NAD(+) + H2O = (2S,4S)-4-hydroxy-2,3,4,5-tetrahydrodipicolinate + NADH + H(+). It catalyses the reaction (S)-2,3,4,5-tetrahydrodipicolinate + NADP(+) + H2O = (2S,4S)-4-hydroxy-2,3,4,5-tetrahydrodipicolinate + NADPH + H(+). Its pathway is amino-acid biosynthesis; L-lysine biosynthesis via DAP pathway; (S)-tetrahydrodipicolinate from L-aspartate: step 4/4. In terms of biological role, catalyzes the conversion of 4-hydroxy-tetrahydrodipicolinate (HTPA) to tetrahydrodipicolinate. In Trichlorobacter lovleyi (strain ATCC BAA-1151 / DSM 17278 / SZ) (Geobacter lovleyi), this protein is 4-hydroxy-tetrahydrodipicolinate reductase.